A 103-amino-acid chain; its full sequence is Large ribosomal subunit protein bL21 (103 aa).

The protein belongs to the bacterial ribosomal protein bL21 family. Part of the 50S ribosomal subunit. Contacts protein L20.

In terms of biological role, this protein binds to 23S rRNA in the presence of protein L20. The chain is Large ribosomal subunit protein bL21 from Clostridium botulinum (strain Alaska E43 / Type E3).